The following is a 2620-amino-acid chain: Ubiquitin carboxyl-terminal hydrolase 24 (2620 aa).

Residues 3–44 (SEEEQHMTTLLCMGFSDPATIRKALRLAKNDINEAVALLTNE) form the UBA domain. The interval 45–102 (RPGLDYGGYEPMDSGGGPSPGPGGGPRGDGGGDGGGGGPSRGGSTGGGGGFDPPPAYH) is disordered. Gly residues predominate over residues 58-95 (SGGGPSPGPGGGPRGDGGGDGGGGGPSRGGSTGGGGGF). Residues Ser63 and Ser88 each carry the phosphoserine modification. Position 942 is a phosphotyrosine (Tyr942). Disordered regions lie at residues 1034–1054 (TSGSGTPSGSSADSSTSSSSS) and 1129–1151 (TLLSESSSQSSKSPSLSSKQQHQ). Residues 1131–1151 (LSESSSQSSKSPSLSSKQQHQ) are compositionally biased toward low complexity. 2 positions are modified to phosphoserine: Ser1141 and Ser1285. Residues 1689-2042 (VGLRNGGATC…NAYMLFYQRV (354 aa)) form the USP domain. The active-site Nucleophile is Cys1698. The interval 1921–1945 (ARQDSSSEVGENGRSVDQGGGGSPR) is disordered. The residue at position 1943 (Ser1943) is a Phosphoserine. His1970 (proton acceptor) is an active-site residue. A phosphoserine mark is found at Ser2047, Ser2077, and Ser2561. The disordered stretch occupies residues 2063 to 2090 (AEDLSLSAPSSPEISPQSSPRPHRPNND). A compositionally biased stretch (low complexity) spans 2069–2082 (SAPSSPEISPQSSP). Thr2565 carries the phosphothreonine modification. The tract at residues 2575-2620 (EKEQSGSSNGSESSPANENGDRHLQQGSESPMMIGELRSDLDDVDP) is disordered. Over residues 2579–2592 (SGSSNGSESSPANE) the composition is skewed to low complexity. Ser2604 carries the post-translational modification Phosphoserine. A compositionally biased stretch (basic and acidic residues) spans 2611–2620 (LRSDLDDVDP).

Belongs to the peptidase C19 family. As to quaternary structure, (Microbial infection) Interacts with human cytomegalovirus protein UL38.

It carries out the reaction Thiol-dependent hydrolysis of ester, thioester, amide, peptide and isopeptide bonds formed by the C-terminal Gly of ubiquitin (a 76-residue protein attached to proteins as an intracellular targeting signal).. Its function is as follows. Ubiquitin-specific protease that regulates cell survival in various contexts through modulating the protein stability of some of its substrates including DDB2, MCL1 or TP53. Plays a positive role on ferritinophagy where ferritin is degraded in lysosomes and releases free iron. The protein is Ubiquitin carboxyl-terminal hydrolase 24 (USP24) of Homo sapiens (Human).